Consider the following 63-residue polypeptide: MAKLLAVFLVLLIAALVCEQALACTPGSRKYDGCNWCTCSSGGAWICTLKYCPPSSGGGLTFA.

A signal peptide spans 1-23; it reads MAKLLAVFLVLLIAALVCEQALA. 3 disulfides stabilise this stretch: Cys24-Cys39, Cys34-Cys52, and Cys37-Cys47. The Pacifastin domain maps to 24–55; it reads CTPGSRKYDGCNWCTCSSGGAWICTLKYCPPS.

Belongs to the protease inhibitor I19 family. In terms of tissue distribution, expressed in hemolymph, ovaries, testes and fat body of adults but are absent in the gut. Also present in larval hemolymph and fat body.

The protein resides in the secreted. Functionally, in vitro, active against alpha-chymotrypsin. This Schistocerca gregaria (Desert locust) protein is Serine protease inhibitor 3.